Consider the following 256-residue polypeptide: NAP1-related protein 1 (256 aa).

Positions 23–64 (IDAELVLSIEKLQEIQDDLEKINEKASDEVLEVEQKYNVIRK) form a coiled coil. The segment at 220–256 (LTYFNNDADEEDFDGDDDGDEEGEEDDDDEEEEDGEE) is disordered. Acidic residues predominate over residues 226-256 (DADEEDFDGDDDGDEEGEEDDDDEEEEDGEE).

Belongs to the nucleosome assembly protein (NAP) family. In terms of assembly, can form homomeric and heteromeric protein complexes with NRP2. Binds histones H2A and H2B and associates with chromatin in vivo. As to expression, ubiquitous.

It is found in the cytoplasm. It localises to the nucleus. Acts as a histone H2A/H2B chaperone in nucleosome assembly, playing a critical role for the correct expression of genes involved in root proliferation and patterning. Required with NRP2 for the maintenance of cell proliferation and differentiation in postembryonic root growth. Involved in both intramolecular and intermolecular somatic homologous recombination. The sequence is that of NAP1-related protein 1 (NRP1) from Arabidopsis thaliana (Mouse-ear cress).